We begin with the raw amino-acid sequence, 154 residues long: Minor structural pilin EpdC (154 aa).

Positions 1–13 (MIKMLQLPFNKKG) are excised as a propeptide. Positions 14–24 (QVSFDFIIAML) match the QXSXEXXXL motif.

The N-terminus is cleaved by the prepilin peptidase EppA, which recognizes the class III signal sequence.

The protein localises to the secreted. It is found in the cell surface. Its subcellular location is the fimbrium. Minor component of the type IV-like pili. Essential for pili formation. In Methanococcus maripaludis (strain DSM 14266 / JCM 13030 / NBRC 101832 / S2 / LL), this protein is Minor structural pilin EpdC.